The chain runs to 354 residues: DNA polymerase IV (354 aa).

Residues 14–198 enclose the UmuC domain; it reads IIHIDMDAFF…MDIAKFHGVG (185 aa). Mg(2+) contacts are provided by D18 and D116. E117 is an active-site residue.

It belongs to the DNA polymerase type-Y family. In terms of assembly, monomer. The cofactor is Mg(2+).

It is found in the cytoplasm. It catalyses the reaction DNA(n) + a 2'-deoxyribonucleoside 5'-triphosphate = DNA(n+1) + diphosphate. In terms of biological role, poorly processive, error-prone DNA polymerase involved in untargeted mutagenesis. Copies undamaged DNA at stalled replication forks, which arise in vivo from mismatched or misaligned primer ends. These misaligned primers can be extended by PolIV. Exhibits no 3'-5' exonuclease (proofreading) activity. May be involved in translesional synthesis, in conjunction with the beta clamp from PolIII. This is DNA polymerase IV from Streptococcus sanguinis (strain SK36).